Consider the following 102-residue polypeptide: RNA-binding protein Hfq (102 aa).

A Sm domain is found at 9 to 68 (DPFLNALRRERVPVSIYLVNGIKLQGQIESFDQFVILLKNTVSQMVYKHAISTVVPSRPV). The tract at residues 63-102 (VPSRPVSHHSNNAGGGTSSNYHHGSSPQNTSAQQDSEETE) is disordered. The span at 70 to 96 (HHSNNAGGGTSSNYHHGSSPQNTSAQQ) shows a compositional bias: polar residues.

The protein belongs to the Hfq family. Homohexamer.

Its function is as follows. RNA chaperone that binds small regulatory RNA (sRNAs) and mRNAs to facilitate mRNA translational regulation in response to envelope stress, environmental stress and changes in metabolite concentrations. Also binds with high specificity to tRNAs. The sequence is that of RNA-binding protein Hfq from Shigella dysenteriae serotype 1 (strain Sd197).